The sequence spans 325 residues: NADH-quinone oxidoreductase subunit H (325 aa).

8 consecutive transmembrane segments (helical) span residues 11-31, 81-101, 114-134, 154-174, 186-206, 237-257, 265-285, and 304-324; these read ILLTVLKAVVILLVVVTCGAF, VIFTLAPMIAFTSLLLAFAIV, IGILFFLMMAGLAVYAVLFAG, LSYEVFLGLSLMGVVAQAGSF, VWNVIPQFFGFITFAIAGVAV, FFVGEYIGIVTISALMVTLFF, LPPFIWFALKTAFFMMMFILI, and ICLPLTLINLLVTAAVILWQA.

The protein belongs to the complex I subunit 1 family. NDH-1 is composed of 13 different subunits. Subunits NuoA, H, J, K, L, M, N constitute the membrane sector of the complex.

The protein resides in the cell inner membrane. The enzyme catalyses a quinone + NADH + 5 H(+)(in) = a quinol + NAD(+) + 4 H(+)(out). Functionally, NDH-1 shuttles electrons from NADH, via FMN and iron-sulfur (Fe-S) centers, to quinones in the respiratory chain. The immediate electron acceptor for the enzyme in this species is believed to be ubiquinone. Couples the redox reaction to proton translocation (for every two electrons transferred, four hydrogen ions are translocated across the cytoplasmic membrane), and thus conserves the redox energy in a proton gradient. This subunit may bind ubiquinone. The chain is NADH-quinone oxidoreductase subunit H from Escherichia coli O45:K1 (strain S88 / ExPEC).